The chain runs to 276 residues: MLSIRTVLGPLAAILLTVIGPFGAHGSGLADKVMWAVNAGGESHVDVHGIHYRKDPLEGRVGRASDYGMKLPILRSNPEDQVLYQTERYNEDSFGYDIPIKEEGEYVIVLKFAEVYFAQSQQKVFDIRVNGHTVVKDLDIFDRVGHSTAHDEIIPISIKKGKLSVQGEVSTFTGKLSVEFVKGYYDNPKVCALYIMKGTADDVPQLQPHPGLEKKEEEEEEEEEEGSPSKKQSNKNRVQSGPRTPNPYASDNSSLMFPILVAFGVFIPTLFCLCRL.

The first 26 residues, 1–26 (MLSIRTVLGPLAAILLTVIGPFGAHG), serve as a signal peptide directing secretion. Over 27–253 (SGLADKVMWA…TPNPYASDNS (227 aa)) the chain is Lumenal. Residues Y67, Y89, Y116, F117, and D186 each coordinate a carbohydrate. Residues 202–249 (DVPQLQPHPGLEKKEEEEEEEEEEGSPSKKQSNKNRVQSGPRTPNPYA) form a disordered region. Residues 216–226 (EEEEEEEEEEG) are compositionally biased toward acidic residues. Over residues 229–249 (SKKQSNKNRVQSGPRTPNPYA) the composition is skewed to polar residues. N252 is a glycosylation site (N-linked (GlcNAc...) asparagine). A helical transmembrane segment spans residues 254–274 (SLMFPILVAFGVFIPTLFCLC). Residues 275-276 (RL) are Cytoplasmic-facing.

Belongs to the malectin family.

The protein resides in the endoplasmic reticulum membrane. In terms of biological role, carbohydrate-binding protein with a strong ligand preference for Glc2-N-glycan. May play a role in the early steps of protein N-glycosylation. Can bind di- or higher oligomers but not monomers of glucose, including maltose, maltotriose, maltotetraose, maltoheptaose, nigerose, kojibose, cellobiose and isomaltose, although based on their subcellular locations, these are unlikely to all be physiological ligands. This Xenopus laevis (African clawed frog) protein is Malectin-B.